The sequence spans 336 residues: Ornithine carbamoyltransferase, catabolic (336 aa).

Carbamoyl phosphate contacts are provided by residues 57 to 60 (STRT), Gln-84, Arg-108, and 135 to 138 (HPTQ). L-ornithine-binding positions include Asn-168, Asp-232, and 236 to 237 (SM). Carbamoyl phosphate contacts are provided by residues 274 to 275 (CL) and Arg-321.

The protein belongs to the aspartate/ornithine carbamoyltransferase superfamily. OTCase family.

The protein resides in the cytoplasm. It carries out the reaction carbamoyl phosphate + L-ornithine = L-citrulline + phosphate + H(+). It functions in the pathway amino-acid degradation; L-arginine degradation via ADI pathway; carbamoyl phosphate from L-arginine: step 2/2. Reversibly catalyzes the transfer of the carbamoyl group from carbamoyl phosphate (CP) to the N(epsilon) atom of ornithine (ORN) to produce L-citrulline. The polypeptide is Ornithine carbamoyltransferase, catabolic (Burkholderia mallei (strain ATCC 23344)).